We begin with the raw amino-acid sequence, 214 residues long: Adenylate kinase (214 aa).

10–15 serves as a coordination point for ATP; the sequence is GAGKGT. The segment at 30–59 is NMP; that stretch reads STGDMLRAAVKAGTPLGVKAQEIMIQGGLV. AMP contacts are provided by residues T31, R36, 57–59, 85–88, and Q92; these read GLV and GFPR. The interval 126 to 163 is LID; sequence GRRSCSSCGKGYHLVFDPPLRAGVCDVCGSGLVQRADD. R127 is a binding site for ATP. 4 residues coordinate Zn(2+): C130, C133, C150, and C153. AMP is bound by residues R160 and R171. G199 is a binding site for ATP.

Belongs to the adenylate kinase family. In terms of assembly, monomer.

It localises to the cytoplasm. The catalysed reaction is AMP + ATP = 2 ADP. It participates in purine metabolism; AMP biosynthesis via salvage pathway; AMP from ADP: step 1/1. Its function is as follows. Catalyzes the reversible transfer of the terminal phosphate group between ATP and AMP. Plays an important role in cellular energy homeostasis and in adenine nucleotide metabolism. In Trichlorobacter lovleyi (strain ATCC BAA-1151 / DSM 17278 / SZ) (Geobacter lovleyi), this protein is Adenylate kinase.